A 350-amino-acid polypeptide reads, in one-letter code: MTEANDLPYLLRVARGEVVKRPPVWMMRQAGRYMKVYRDLRDKYPSFRERSENPDLAIEISLQPWQAFQPDGVIMFSDILTPLPGIGIPFDIIESKGPIIDPPIRTQAQVDQLHALDPESSLPFIKTILGTLRKEVGNQSTVLGFVGAPWTLAAYAIEGKSSKDYKVIKQMAFSEPAILHSFLDKIAEAIAVYVRYQIDCGAQVVQLFDSWAGQLSPQDYDTFALPYQQKVVKLVKEIHPDTPLILYISGSAGILERMGKSGVDIVSVDWTVDMADARQRLGKEMKVQGNMDPGVLFGSQDFIKERILDTVRKAGQGGHIFNLGHGVLVGTPEDNVRFFFETAKQVDQLL.

Substrate is bound by residues 28–32 (RQAGR), phenylalanine 47, aspartate 78, tyrosine 155, serine 210, and histidine 325.

The protein belongs to the uroporphyrinogen decarboxylase family. Homodimer.

It is found in the cytoplasm. The catalysed reaction is uroporphyrinogen III + 4 H(+) = coproporphyrinogen III + 4 CO2. Its pathway is porphyrin-containing compound metabolism; protoporphyrin-IX biosynthesis; coproporphyrinogen-III from 5-aminolevulinate: step 4/4. In terms of biological role, catalyzes the decarboxylation of four acetate groups of uroporphyrinogen-III to yield coproporphyrinogen-III. This chain is Uroporphyrinogen decarboxylase, found in Synechocystis sp. (strain ATCC 27184 / PCC 6803 / Kazusa).